Consider the following 691-residue polypeptide: Elongation factor G (691 aa).

Positions 8–282 (ERVRNIGIAA…AVIDYLPAPI (275 aa)) constitute a tr-type G domain. GTP-binding positions include 17 to 24 (AHIDAGKT), 81 to 85 (DTPGH), and 135 to 138 (NKMD).

Belongs to the TRAFAC class translation factor GTPase superfamily. Classic translation factor GTPase family. EF-G/EF-2 subfamily.

The protein localises to the cytoplasm. Functionally, catalyzes the GTP-dependent ribosomal translocation step during translation elongation. During this step, the ribosome changes from the pre-translocational (PRE) to the post-translocational (POST) state as the newly formed A-site-bound peptidyl-tRNA and P-site-bound deacylated tRNA move to the P and E sites, respectively. Catalyzes the coordinated movement of the two tRNA molecules, the mRNA and conformational changes in the ribosome. The chain is Elongation factor G from Prochlorococcus marinus (strain SARG / CCMP1375 / SS120).